The following is a 134-amino-acid chain: Profilin-3 (134 aa).

Cys13 and Cys118 form a disulfide bridge. An Involved in PIP2 interaction motif is present at residues 84–100 (AVIRGKKGSGGITIKKT). Thr114 bears the Phosphothreonine mark.

The protein belongs to the profilin family. In terms of assembly, occurs in many kinds of cells as a complex with monomeric actin in a 1:1 ratio. Phosphorylated by MAP kinases.

It localises to the cytoplasm. Its subcellular location is the cytoskeleton. In terms of biological role, binds to actin and affects the structure of the cytoskeleton. At high concentrations, profilin prevents the polymerization of actin, whereas it enhances it at low concentrations. This chain is Profilin-3, found in Olea europaea (Common olive).